Reading from the N-terminus, the 430-residue chain is Rho GTPase-activating protein 2 (430 aa).

Residues 1–36 (MTGLVMMTKGGGCGGGGKGGRRKSTAEEEEEEEQNQ) form a disordered region. Gly residues predominate over residues 9–18 (KGGGCGGGGK). One can recognise a CRIB domain in the interval 80–93 (IGWPTNVRHITHVT). The Rho-GAP domain occupies 125-310 (VSAESMQCSY…TLAEREENAT (186 aa)). Positions 307-372 (ENATGSEGYS…HLSRHSTHED (66 aa)) are disordered. Low complexity predominate over residues 316-326 (SPSHSSNSQTD). Residues 347 to 356 (ECGEEEEVEE) are compositionally biased toward acidic residues. Residues 357-371 (VEQHQEHLSRHSTHE) are compositionally biased toward basic and acidic residues.

As to quaternary structure, homodimerizes via its Rho-GAP domain and forms a tetrameric complex (2:2) with ARAC1/ROP3, ARAC2/ROP7, ARAC4/ROP2, ARAC5/ROP4, ARAC7/ROP9 or ARAC11/ROP1.

Its function is as follows. Acts as a GTPase activator for the Rac-type GTPase by converting it to an inactive GDP-bound state. This chain is Rho GTPase-activating protein 2 (ROPGAP2), found in Arabidopsis thaliana (Mouse-ear cress).